A 375-amino-acid chain; its full sequence is Fasciculation and elongation protein zeta-2 (375 aa).

Residues 1–42 (MAADGDWQDFYEFQEPAGSVRDQENCNASPEAGAGAHAGGDS) are disordered. Residues serine 130, serine 171, and serine 190 each carry the phosphoserine modification. Residues 156-177 (TADQVIEEIEEMMQESPDLEDD) adopt a coiled-coil conformation. Positions 206–281 (ERVKRLSVSE…AKKKKKLKNG (76 aa)) form a coiled coil. The segment at 265-297 (QKEHKETAKKKKKLKNGSSQNGRNERSHMPGTR) is disordered.

Belongs to the zygin family. In terms of assembly, homodimer; disulfide-linked. May form heterodimers with FEZ1. Interacts with synaptotagmin.

Functionally, involved in axonal outgrowth and fasciculation. This chain is Fasciculation and elongation protein zeta-2 (Fez2), found in Rattus norvegicus (Rat).